The primary structure comprises 902 residues: Respiratory burst oxidase homolog protein A (902 aa).

At 1-344 (MMNRSEMQKL…KYFLFDNWKR (344 aa)) the chain is on the cytoplasmic side. 2 disordered regions span residues 63–87 (KSPN…RSGR) and 107–130 (ASSV…RRSK). Polar residues predominate over residues 74–87 (YEDQSLLRQGRSGR). Positions 107–116 (ASSVSSSSAR) are enriched in low complexity. 2 EF-hand-like regions span residues 163–173 (TMTTNGLLHRS) and 198–209 (ENVSGDSININE). EF-hand domains follow at residues 221-256 (DFDS…SASA) and 265-300 (QADE…APMQ). Residues aspartate 234, aspartate 236, aspartate 238, arginine 240, and glutamate 245 each coordinate Ca(2+). A phosphoserine mark is found at serine 311 and serine 315. A helical transmembrane segment spans residues 345–365 (VWVMALWIGAMAGLFTWKFME). Residues 366 to 380 (YRKRSAYEVMGVCVC) lie on the Extracellular side of the membrane. Residues 381 to 401 (IAKGAAETLKLNMAMILLPVC) form a helical membrane-spanning segment. The Ferric oxidoreductase domain occupies 383 to 540 (KGAAETLKLN…LFVIVYSLLV (158 aa)). Topologically, residues 402-428 (RNTITWLRTKTKLSAIVPFDDSLNFHK) are cytoplasmic. The helical transmembrane segment at 429-449 (VIAIGISVGVGIHATSHLACD) threads the bilayer. Residues 450–484 (FPRLIAADEDQYEPMEKYFGPQTKRYLDFVQSVEG) lie on the Extracellular side of the membrane. A helical membrane pass occupies residues 485 to 505 (VTGIGMVVLMTIAFTLATTWF). The Cytoplasmic segment spans residues 506-529 (RRNKLNLPGPLKKITGFNAFWYSH). A helical transmembrane segment spans residues 530-550 (HLFVIVYSLLVVHGFYVYLII). Over 551 to 709 (EPWYKKTTWM…PAQDYKKFEV (159 aa)) the chain is Extracellular. The FAD-binding FR-type domain occupies 575 to 703 (IRAFRSSVEA…DGPYGAPAQD (129 aa)). A helical membrane pass occupies residues 710–730 (VLLVGLGIGATPMISIVSDII). Over 731 to 902 (NNLKGVEEGS…TKFIFHKENF (172 aa)) the chain is Cytoplasmic. The interval 738 to 760 (EGSNRRQSPIHNMVTPPVSPSRK) is disordered.

This sequence belongs to the RBOH (TC 5.B.1.3) family. In terms of assembly, monomer and homodimer.

It localises to the membrane. In terms of biological role, calcium-dependent NADPH oxidase that generates superoxide. This chain is Respiratory burst oxidase homolog protein A (RBOHA), found in Arabidopsis thaliana (Mouse-ear cress).